The primary structure comprises 302 residues: Gigasin-6 (302 aa).

Residues 1 to 22 (MSSRNLLYSSVVLFLVLFYCHG) form the signal peptide. Residues 75–95 (ITTDTLFGLGGISALFANILI) traverse the membrane as a helical segment.

In terms of tissue distribution, component of the organic matrix of calcified shell layers.

The protein resides in the membrane. The polypeptide is Gigasin-6 (Magallana gigas (Pacific oyster)).